A 201-amino-acid chain; its full sequence is Recombination protein RecR (201 aa).

The segment at 60–75 adopts a C4-type zinc-finger fold; sequence CSRCGNVDTVDPCTVC. Positions 83–178 constitute a Toprim domain; sequence SVIIVVEDVA…KITRLAHGVP (96 aa).

The protein belongs to the RecR family.

In terms of biological role, may play a role in DNA repair. It seems to be involved in an RecBC-independent recombinational process of DNA repair. It may act with RecF and RecO. The chain is Recombination protein RecR from Rhizobium rhizogenes (strain K84 / ATCC BAA-868) (Agrobacterium radiobacter).